A 325-amino-acid polypeptide reads, in one-letter code: tRNA U34 carboxymethyltransferase (325 aa).

Carboxy-S-adenosyl-L-methionine contacts are provided by Lys93, Trp107, Lys112, Gly132, Met198, Tyr202, and Arg317.

The protein belongs to the class I-like SAM-binding methyltransferase superfamily. CmoB family. In terms of assembly, homotetramer.

It catalyses the reaction carboxy-S-adenosyl-L-methionine + 5-hydroxyuridine(34) in tRNA = 5-carboxymethoxyuridine(34) in tRNA + S-adenosyl-L-homocysteine + H(+). Its function is as follows. Catalyzes carboxymethyl transfer from carboxy-S-adenosyl-L-methionine (Cx-SAM) to 5-hydroxyuridine (ho5U) to form 5-carboxymethoxyuridine (cmo5U) at position 34 in tRNAs. This Desulforapulum autotrophicum (strain ATCC 43914 / DSM 3382 / VKM B-1955 / HRM2) (Desulfobacterium autotrophicum) protein is tRNA U34 carboxymethyltransferase.